Consider the following 440-residue polypeptide: tRNA modification GTPase MnmE (440 aa).

Residues R23, E80, and K120 each coordinate (6S)-5-formyl-5,6,7,8-tetrahydrofolate. A TrmE-type G domain is found at 217–366; sequence GLKIVIAGEP…LLAMLQAHLP (150 aa). N227 lines the K(+) pocket. GTP contacts are provided by residues 227 to 232, 246 to 252, and 271 to 274; these read NAGKSS, TEIAGTT, and DTAG. Residue S231 participates in Mg(2+) binding. The K(+) site is built by T246, I248, and T251. A Mg(2+)-binding site is contributed by T252. A (6S)-5-formyl-5,6,7,8-tetrahydrofolate-binding site is contributed by K440.

It belongs to the TRAFAC class TrmE-Era-EngA-EngB-Septin-like GTPase superfamily. TrmE GTPase family. As to quaternary structure, homodimer. Heterotetramer of two MnmE and two MnmG subunits. It depends on K(+) as a cofactor.

The protein localises to the cytoplasm. In terms of biological role, exhibits a very high intrinsic GTPase hydrolysis rate. Involved in the addition of a carboxymethylaminomethyl (cmnm) group at the wobble position (U34) of certain tRNAs, forming tRNA-cmnm(5)s(2)U34. In Sinorhizobium medicae (strain WSM419) (Ensifer medicae), this protein is tRNA modification GTPase MnmE.